The chain runs to 515 residues: MVVAYKHEPFTDFSVEANKLAFEEGLKKVESYLGQDYPLIIGGEKITTEDKIVSVNPANKEELVGRVSKASRELAEKAMQVADATFQTWRKSKPEMRADILFRAAAIVRRRKHEFSAILVKEAGKPWNEADADTAEAIDFMEYYARQMLKLKDGMPVESRPIEYNRFSYIPLGVGVIISPWNFPFAIMAGMTTAAVVSGNTVLLKPASTTPVVAAKFMEVLEEAGLPAGVVNFVPGNGSEVGDYLVDHPRTRFVSFTGSRDVGIRIYERAAKVNPGQIWLKRVIAEMGGKDTIVVDKEADLELAAKSIVASAFGFSGQKCSACSRAVIHEDVYDHVLNRAVELTKELTVGNPDAKDINMGPVNDQAAFDKVMSYVAIGKEEGKIVSGGEGDDSKGWFIQPTIVADVAEDARLMKEEIFGPVVAFCKAKDFDHALAIANNTEYGLTGAVLSNNRDHIEKAREDFHVGNLYFNRGCTGAIVGYQPFGGFNMSGTDSKAGGPDYLALHMQAKTTSETL.

Catalysis depends on residues Glu286 and Cys320.

It belongs to the aldehyde dehydrogenase family. RocA subfamily.

It carries out the reaction L-glutamate 5-semialdehyde + NAD(+) + H2O = L-glutamate + NADH + 2 H(+). The protein operates within amino-acid degradation; L-proline degradation into L-glutamate; L-glutamate from L-proline: step 2/2. This is 1-pyrroline-5-carboxylate dehydrogenase from Bacillus mycoides (strain KBAB4) (Bacillus weihenstephanensis).